Consider the following 344-residue polypeptide: Phenylalanine--tRNA ligase alpha subunit (344 aa).

Glu-255 is a binding site for Mg(2+).

The protein belongs to the class-II aminoacyl-tRNA synthetase family. Phe-tRNA synthetase alpha subunit type 1 subfamily. As to quaternary structure, tetramer of two alpha and two beta subunits. The cofactor is Mg(2+).

The protein localises to the cytoplasm. It catalyses the reaction tRNA(Phe) + L-phenylalanine + ATP = L-phenylalanyl-tRNA(Phe) + AMP + diphosphate + H(+). The chain is Phenylalanine--tRNA ligase alpha subunit from Cytophaga hutchinsonii (strain ATCC 33406 / DSM 1761 / CIP 103989 / NBRC 15051 / NCIMB 9469 / D465).